Here is a 926-residue protein sequence, read N- to C-terminus: MADDDVLFEDVYELCEVIGKGPFSVVRRCINRETGQQFAVKIVDVAKFTSSPGLSTEDLKREASICHMLKHPHIVELLETYSSDGMLYMVFEFMDGADLCFEIVKRADAGFVYSEAVASHYMRQILEALRYCHDNNIIHRDVKPHCVLLASKENSAPVKLGGFGVAIQLGESGLVAGGRVGTPHFMAPEVVKREPYGKPVDVWGCGVILFILLSGCLPFYGTKERLFEGIIKGKYKMNPRQWSHISESAKDLVRRMLMLDPAERITVYEALNHPWLKERDRYAYKIHLPETVEQLRKFNARRKLKGAVLAAVSSHKFNSFYGDPPEELPDFSEDPTSSGLLAAERAVSQVLDSLEEIHALTDCSEKDLDFLHSVFQDQHLHTLLDLYDKINTKSSPQIRNPPSDAVQRAKEVLEEISCYPENNDAKELKRILTQPHFMALLQTHDVVAHEVYSDEALRVTPPPTSPYLNGDSPESANGDMDMENVTRVRLVQFQKNTDEPMGITLKMNELNHCIVARIMHGGMIHRQGTLHVGDEIREINGISVANQTVEQLQKMLREMRGSITFKIVPSYRTQSSSCERDSPSTSRQSPANGHSSTNNSVSDLPSTTQPKGRQIYVRAQFEYDPAKDDLIPCKEAGIRFRVGDIIQIISKDDHNWWQGKLENSKNGTAGLIPSPELQEWRVACIAMEKTKQEQQASCTWFGKKKKQYKDKYLAKHNAVFDQLDLVTYEEVVKLPAFKRKTLVLLGAHGVGRRHIKNTLITKHPDRFAYPIPHTTRPPKKDEENGKNYYFVSHDQMMQDISNNEYLEYGSHEDAMYGTKLETIRKIHEQGLIAILDVEPQALKVLRTAEFAPFVVFIAAPTITPGLNEDESLQRLQKESDILQRTYAHYFDLTIINNEIDETIRHLEEAVELVCTAPQWVPVSWVY.

The region spanning 12–276 is the Protein kinase domain; that stretch reads YELCEVIGKG…VYEALNHPWL (265 aa). Residues 18-26 and lysine 41 each bind ATP; that span reads IGKGPFSVV. Phosphoserine is present on serine 51. Aspartate 141 is a catalytic residue. Residues serine 151 and serine 155 each carry the phosphoserine; by autocatalysis modification. Threonine 182 is subject to Phosphothreonine. 2 positions are modified to phosphoserine: lysine 192 and serine 313. The interval 305–315 is calmodulin-binding; the sequence is KGAVLAAVSSH. 2 L27 domains span residues 343–398 and 402–455; these read AERA…SPQI and PSDA…YSDE. Residues 482-909 are required for interaction with NRXN1 (via C-terminal tail); that stretch reads MENVTRVRLV…DETIRHLEEA (428 aa). The PDZ domain occupies 489–564; that stretch reads RLVQFQKNTD…MLREMRGSIT (76 aa). Residues tyrosine 571 and serine 577 each carry the phosphoserine modification. Positions 574 to 610 are disordered; it reads QSSSCERDSPSTSRQSPANGHSSTNNSVSDLPSTTQP. The SH3 domain occupies 612 to 682; that stretch reads GRQIYVRAQF…PSPELQEWRV (71 aa). One can recognise a Guanylate kinase-like domain in the interval 739–911; it reads RKTLVLLGAH…TIRHLEEAVE (173 aa).

In the N-terminal section; belongs to the protein kinase superfamily. CAMK Ser/Thr protein kinase family. CaMK subfamily. This sequence belongs to the MAGUK family. CASK and LIN7 form two mutually exclusive tripartite complexes with APBA1 or CASKIN1. Component of the brain-specific heterotrimeric complex (LIN-10-LIN-2-LIN-7 complex) composed of at least APBA1, CASK, and LIN7, which associates with the motor protein KIF17 to transport vesicles along microtubules. Forms a heterotrimeric complex with DLG1 and LIN7B via their L27 domains. Identified in a complex with ACTN4, IQGAP1, MAGI2, NPHS1, SPTAN1 and SPTBN1. Part of a complex containing CASK, TBR1 and TSPYL2. Interacts with WHRN. Interacts (via the PDZ, SH3 and guanylate kinase-like domains) with NRXN1 (via C-terminus). Interacts with CASKIN1, APBA1, LIN7(A/B/C) and L27 domain of DLG1 and isoform 2 of DLG4. Interacts with FCHSD2. Interacts with KIRREL3. Interacts with TBR1. Interacts with TSPYL2. The cofactor is Unlike other protein kinases, does not require a divalent cation such as magnesium for catalytic activity.. In terms of tissue distribution, ubiquitous. Expression is significantly greater in brain relative to kidney, lung, and liver and in fetal brain and kidney relative to lung and liver.

The protein resides in the nucleus. The protein localises to the cytoplasm. Its subcellular location is the cell membrane. The enzyme catalyses L-seryl-[protein] + ATP = O-phospho-L-seryl-[protein] + ADP + H(+). It catalyses the reaction L-threonyl-[protein] + ATP = O-phospho-L-threonyl-[protein] + ADP + H(+). Differs from archetypal CaMK members in that the kinase domain exhibits a constitutively active conformation and the autoinhibitory region does not engage in direct contact with the ATP-binding cleft, although it still binds Ca(2+)/CAM. Its function is as follows. Multidomain scaffolding Mg(2+)-independent protein kinase that catalyzes the phosphotransfer from ATP to proteins such as NRXN1, and plays a role in synaptic transmembrane protein anchoring and ion channel trafficking. Contributes to neural development and regulation of gene expression via interaction with the transcription factor TBR1. Binds to cell-surface proteins, including amyloid precursor protein, neurexins and syndecans. May mediate a link between the extracellular matrix and the actin cytoskeleton via its interaction with syndecan and with the actin/spectrin-binding protein 4.1. Component of the LIN-10-LIN-2-LIN-7 complex, which associates with the motor protein KIF17 to transport vesicles containing N-methyl-D-aspartate (NMDA) receptor subunit NR2B along microtubules. In Homo sapiens (Human), this protein is Peripheral plasma membrane protein CASK.